Consider the following 200-residue polypeptide: Molybdopterin synthase catalytic subunit (200 aa).

Residues 16–30 show a composition bias toward polar residues; sequence KLPSSHQSVEDSASE. Residues 16-43 form a disordered region; that stretch reads KLPSSHQSVEDSASEPSGYEAKDPPQDT. The residue at position 20 (serine 20) is a Phosphoserine. Substrate is bound by residues 154–155, lysine 170, and 177–179; these read HR and KKE.

Belongs to the MoaE family. MOCS2B subfamily. Heterotetramer; composed of 2 small (MOCS2A) and 2 large (MOCS2B) subunits.

The protein resides in the cytoplasm. It localises to the cytosol. It carries out the reaction 2 [molybdopterin-synthase sulfur-carrier protein]-C-terminal-Gly-aminoethanethioate + cyclic pyranopterin phosphate + H2O = molybdopterin + 2 [molybdopterin-synthase sulfur-carrier protein]-C-terminal Gly-Gly + 2 H(+). Its pathway is cofactor biosynthesis; molybdopterin biosynthesis. Its function is as follows. Catalytic subunit of the molybdopterin synthase complex, a complex that catalyzes the conversion of precursor Z into molybdopterin. Acts by mediating the incorporation of 2 sulfur atoms from thiocarboxylated MOCS2A into precursor Z to generate a dithiolene group. This is Molybdopterin synthase catalytic subunit from Rattus norvegicus (Rat).